We begin with the raw amino-acid sequence, 461 residues long: tRNA(Ile)-lysidine synthase (461 aa).

26 to 31 contributes to the ATP binding site; the sequence is SGGPDS.

Belongs to the tRNA(Ile)-lysidine synthase family.

The protein resides in the cytoplasm. The enzyme catalyses cytidine(34) in tRNA(Ile2) + L-lysine + ATP = lysidine(34) in tRNA(Ile2) + AMP + diphosphate + H(+). In terms of biological role, ligates lysine onto the cytidine present at position 34 of the AUA codon-specific tRNA(Ile) that contains the anticodon CAU, in an ATP-dependent manner. Cytidine is converted to lysidine, thus changing the amino acid specificity of the tRNA from methionine to isoleucine. This is tRNA(Ile)-lysidine synthase from Clostridium acetobutylicum (strain ATCC 824 / DSM 792 / JCM 1419 / IAM 19013 / LMG 5710 / NBRC 13948 / NRRL B-527 / VKM B-1787 / 2291 / W).